Reading from the N-terminus, the 500-residue chain is NAD(P)H-quinone oxidoreductase chain 4, chloroplastic (500 aa).

Transmembrane regions (helical) follow at residues F4 to L24, L37 to L57, I87 to V107, A111 to S131, L134 to M154, F167 to L187, A208 to I228, H242 to V262, A272 to A292, I305 to D325, G330 to G350, L386 to T406, I416 to M436, and L462 to V482.

It belongs to the complex I subunit 4 family.

Its subcellular location is the plastid. It localises to the chloroplast thylakoid membrane. It catalyses the reaction a plastoquinone + NADH + (n+1) H(+)(in) = a plastoquinol + NAD(+) + n H(+)(out). The enzyme catalyses a plastoquinone + NADPH + (n+1) H(+)(in) = a plastoquinol + NADP(+) + n H(+)(out). In Oenothera parviflora (Small-flowered evening primrose), this protein is NAD(P)H-quinone oxidoreductase chain 4, chloroplastic.